The following is a 159-amino-acid chain: MQQAPVVLSTLDKLLNWGRSNSLWPLTYGLACCAIEMMATGGSRFDFDRFGTIFRASPRQSDVMIIAGTLTKKHAEFMRRLYDQMPEPKWVISMGSCANTGGMFNTYATVQGADRIVPVDIYLPGCAPRPETLQYALMVLQDKIRRSKAIKQDAPKRLV.

Residues Cys-32, Cys-33, Cys-97, and Cys-126 each contribute to the [4Fe-4S] cluster site.

Belongs to the complex I 20 kDa subunit family. As to quaternary structure, NDH-1 is composed of 14 different subunits. Subunits NuoB, C, D, E, F, and G constitute the peripheral sector of the complex. The cofactor is [4Fe-4S] cluster.

It localises to the cell inner membrane. It catalyses the reaction a quinone + NADH + 5 H(+)(in) = a quinol + NAD(+) + 4 H(+)(out). Its function is as follows. NDH-1 shuttles electrons from NADH, via FMN and iron-sulfur (Fe-S) centers, to quinones in the respiratory chain. The immediate electron acceptor for the enzyme in this species is believed to be ubiquinone. Couples the redox reaction to proton translocation (for every two electrons transferred, four hydrogen ions are translocated across the cytoplasmic membrane), and thus conserves the redox energy in a proton gradient. This chain is NADH-quinone oxidoreductase subunit B, found in Helicobacter pylori (strain P12).